A 444-amino-acid polypeptide reads, in one-letter code: DNA repair protein RadA (444 aa).

The C4-type zinc finger occupies 10 to 27; that stretch reads CQECGYKSVKWLGKCPSC. Residue 91-98 coordinates ATP; sequence GEPGIGKS. The RadA KNRFG motif signature appears at 247–251; the sequence is KNRFG. The lon-protease-like stretch occupies residues 345-444; that stretch reads DVFVNVAGGM…HIQEAIEVLF (100 aa).

This sequence belongs to the RecA family. RadA subfamily.

In terms of biological role, DNA-dependent ATPase involved in processing of recombination intermediates, plays a role in repairing DNA breaks. Stimulates the branch migration of RecA-mediated strand transfer reactions, allowing the 3' invading strand to extend heteroduplex DNA faster. Binds ssDNA in the presence of ADP but not other nucleotides, has ATPase activity that is stimulated by ssDNA and various branched DNA structures, but inhibited by SSB. Does not have RecA's homology-searching function. This Aquifex aeolicus (strain VF5) protein is DNA repair protein RadA.